The chain runs to 709 residues: Dual specificity calcium/calmodulin-dependent 3',5'-cyclic nucleotide phosphodiesterase 1C (709 aa).

Methionine 1 is subject to N-acetylmethionine. The interval 123-146 (EKPRFKSIVHAVQAGIFVERMYRR) is calmodulin-binding. Residues 151–528 (VGLSYPPAVI…ERWRAKVPKE (378 aa)) form the PDEase domain. The active-site Proton donor is the histidine 228. Residues histidine 232, histidine 268, aspartate 269, and aspartate 376 each coordinate Zn(2+). Aspartate 269 is a binding site for Mg(2+). Disordered regions lie at residues 453 to 495 (LIDE…APIN) and 523 to 650 (AKVP…TCRL). A compositionally biased stretch (polar residues) spans 483-495 (VKTSGSEGSAPIN). Basic and acidic residues predominate over residues 523-556 (AKVPKEEKAKKEAEEKARLAAEEQQKEMEAKSQA). Residues 571–581 (ETKNQVNGTRA) show a composition bias toward polar residues. Basic and acidic residues-rich tracts occupy residues 582–598 (NKSDNPRGKNSKAEKSS) and 606–633 (DFKDGKNKTDKKDHSNIGNDSKKTDGTK).

This sequence belongs to the cyclic nucleotide phosphodiesterase family. PDE1 subfamily. In terms of assembly, homodimer. Zn(2+) serves as cofactor. It depends on Mg(2+) as a cofactor. As to expression, isoform PDE1C2 is present in the heart and brain and, at lower levels in the lung, liver, kidney and skeletal muscle. Isoform PDE1C1 is expressed in the heart and brain and, at lower levels in lung. Also expressed at low levels in uterus and testis.

The protein localises to the lysosome. It catalyses the reaction a nucleoside 3',5'-cyclic phosphate + H2O = a nucleoside 5'-phosphate + H(+). The enzyme catalyses 3',5'-cyclic GMP + H2O = GMP + H(+). It carries out the reaction 3',5'-cyclic AMP + H2O = AMP + H(+). With respect to regulation, type I PDE are activated by the binding of calmodulin in the presence of Ca(2+). Calmodulin-dependent cyclic nucleotide phosphodiesterase with a dual specificity for the second messengers cAMP and cGMP, which are key regulators of many important physiological processes. Has a high affinity for both cAMP and cGMP. Modulates the amplitude and duration of the cAMP signal in sensory cilia in response to odorant stimulation, hence contributing to the generation of action potentials. Regulates smooth muscle cell proliferation. Regulates the stability of growth factor receptors, including PDGFRB. The sequence is that of Dual specificity calcium/calmodulin-dependent 3',5'-cyclic nucleotide phosphodiesterase 1C from Homo sapiens (Human).